An 861-amino-acid chain; its full sequence is Translation initiation factor IF-2 (861 aa).

Disordered stretches follow at residues 1-69 (MSDA…GESA) and 92-273 (ARAR…GREK). Positions 53–65 (GGPGGKQGGGAKG) are enriched in gly residues. A compositionally biased stretch (basic and acidic residues) spans 94–108 (ARAEAADREAQKKQD). Residues 109-120 (AAAMAQRAASEQ) are compositionally biased toward low complexity. 2 stretches are compositionally biased toward basic and acidic residues: residues 121-155 (RQLE…KAEA) and 163-186 (DSGR…KRTP). Residues 213-223 (PGPAAKQQPAR) are compositionally biased toward low complexity. The segment covering 255–273 (RAREREKQRRQDTSGGREK) has biased composition (basic and acidic residues). Residues 357 to 527 (PRAPVIAVMG…ALQAELLDLK (171 aa)) enclose the tr-type G domain. Positions 366–373 (GHVDHGKT) are G1. A GTP-binding site is contributed by 366 to 373 (GHVDHGKT). A G2 region spans residues 391–395 (GITQH). The G3 stretch occupies residues 413–416 (DTPG). GTP is bound by residues 413–417 (DTPGH) and 467–470 (NKCD). The segment at 467–470 (NKCD) is G4. The tract at residues 503 to 505 (SAK) is G5.

This sequence belongs to the TRAFAC class translation factor GTPase superfamily. Classic translation factor GTPase family. IF-2 subfamily.

The protein localises to the cytoplasm. In terms of biological role, one of the essential components for the initiation of protein synthesis. Protects formylmethionyl-tRNA from spontaneous hydrolysis and promotes its binding to the 30S ribosomal subunits. Also involved in the hydrolysis of GTP during the formation of the 70S ribosomal complex. The polypeptide is Translation initiation factor IF-2 (Maricaulis maris (strain MCS10) (Caulobacter maris)).